The sequence spans 361 residues: Nicotinate-nucleotide--dimethylbenzimidazole phosphoribosyltransferase (361 aa).

Glutamate 315 functions as the Proton acceptor in the catalytic mechanism.

The protein belongs to the CobT family.

It carries out the reaction 5,6-dimethylbenzimidazole + nicotinate beta-D-ribonucleotide = alpha-ribazole 5'-phosphate + nicotinate + H(+). Its pathway is nucleoside biosynthesis; alpha-ribazole biosynthesis; alpha-ribazole from 5,6-dimethylbenzimidazole: step 1/2. Functionally, catalyzes the synthesis of alpha-ribazole-5'-phosphate from nicotinate mononucleotide (NAMN) and 5,6-dimethylbenzimidazole (DMB). The sequence is that of Nicotinate-nucleotide--dimethylbenzimidazole phosphoribosyltransferase from Clostridium perfringens (strain 13 / Type A).